We begin with the raw amino-acid sequence, 603 residues long: Geraniol synthase, chloroplastic (603 aa).

The transit peptide at 1–50 (MALQMIAPFLSSFLPNPRHSLAAHGLTHQKCVSKHISCSTTTPTYSTTVP) directs the protein to the chloroplast. Residues Arg-301, Asp-338, Asp-342, Arg-479, and Asp-482 each contribute to the (2E)-geranyl diphosphate site. Mg(2+) is bound by residues Asp-338 and Asp-342. The short motif at 338-342 (DDIYD) is the DDXXD motif element. Asp-482, Thr-486, and Glu-490 together coordinate Mg(2+).

It belongs to the terpene synthase family. Tpsb subfamily. As to quaternary structure, homodimer. The cofactor is Mg(2+). It depends on Mn(2+) as a cofactor. As to expression, expressed in the oil cells of the leaves.

It localises to the plastid. The protein resides in the chloroplast. The enzyme catalyses (2E)-geranyl diphosphate + H2O = (2E)-geraniol + diphosphate. It functions in the pathway secondary metabolite biosynthesis; terpenoid biosynthesis. Monoterpene synthase that catalyzes the formation of geraniol from geranyl diphosphate. This is Geraniol synthase, chloroplastic (GerS) from Cinnamomum tenuipile (Alseodaphne mollis).